The sequence spans 215 residues: Adenylate kinase (215 aa).

10–15 provides a ligand contact to ATP; it reads GAGKGT. An NMP region spans residues 30–59; sequence STGDMFRKAIKDETDLGKEAKSYMDRGELV. AMP is bound by residues threonine 31, arginine 36, 57-59, 85-88, and glutamine 92; these read ELV and GFPR. The interval 126–163 is LID; that stretch reads GRRICEKCGTTYHLVFNPPKVDGICDIDGGKLYQREDD. Arginine 127 contacts ATP. Residues cysteine 130 and cysteine 133 each contribute to the Zn(2+) site. 136 to 137 contributes to the ATP binding site; the sequence is TY. Cysteine 150 and aspartate 153 together coordinate Zn(2+). The AMP site is built by arginine 160 and arginine 171. ATP is bound at residue lysine 199.

Belongs to the adenylate kinase family. In terms of assembly, monomer.

The protein resides in the cytoplasm. The catalysed reaction is AMP + ATP = 2 ADP. Its pathway is purine metabolism; AMP biosynthesis via salvage pathway; AMP from ADP: step 1/1. Functionally, catalyzes the reversible transfer of the terminal phosphate group between ATP and AMP. Plays an important role in cellular energy homeostasis and in adenine nucleotide metabolism. This Staphylococcus epidermidis (strain ATCC 35984 / DSM 28319 / BCRC 17069 / CCUG 31568 / BM 3577 / RP62A) protein is Adenylate kinase.